The chain runs to 332 residues: Ketol-acid reductoisomerase (NAD(+)) (332 aa).

The 186-residue stretch at 1–186 (MEILHDEDVD…HWTKAGILEC (186 aa)) folds into the KARI N-terminal Rossmann domain. Residues 24–27 (YGAQ), Glu46, Asn55, Ser57, and 87–90 (DEVQ) each bind NAD(+). The active site involves His112. Gly138 is a binding site for NAD(+). Positions 187–332 (TFEQETYEDL…AEIRKLFAQK (146 aa)) constitute a KARI C-terminal knotted domain. Mg(2+) contacts are provided by Asp195, Glu199, Glu231, and Glu235. Substrate is bound at residue Ser256.

Belongs to the ketol-acid reductoisomerase family. As to quaternary structure, homodimer. The cofactor is Mg(2+).

It carries out the reaction (2R)-2,3-dihydroxy-3-methylbutanoate + NAD(+) = (2S)-2-acetolactate + NADH + H(+). Its pathway is amino-acid biosynthesis; L-isoleucine biosynthesis; L-isoleucine from 2-oxobutanoate: step 2/4. It participates in amino-acid biosynthesis; L-valine biosynthesis; L-valine from pyruvate: step 2/4. Its function is as follows. Involved in the biosynthesis of branched-chain amino acids (BCAA). Catalyzes an alkyl-migration followed by a ketol-acid reduction of (S)-2-acetolactate (S2AL) to yield (R)-2,3-dihydroxy-isovalerate. In the isomerase reaction, S2AL is rearranged via a Mg-dependent methyl migration to produce 3-hydroxy-3-methyl-2-ketobutyrate (HMKB). In the reductase reaction, this 2-ketoacid undergoes a metal-dependent reduction by NADH to yield (R)-2,3-dihydroxy-isovalerate. The protein is Ketol-acid reductoisomerase (NAD(+)) of Uncultured archaeon GZfos26G2.